Reading from the N-terminus, the 94-residue chain is MLHLVVYDISDDGSRARLAKLLEKFGLQRVQYSAFRGELNPNDREVLARQVGKFVRDDRDCIFIIPLCQRCSSTAIVISNTGVELVKEKGVEFV.

Asp8 is a binding site for Mg(2+).

This sequence belongs to the CRISPR-associated endoribonuclease Cas2 protein family. In terms of assembly, homodimer, forms a heterotetramer with a Cas1 homodimer. Requires Mg(2+) as cofactor.

CRISPR (clustered regularly interspaced short palindromic repeat), is an adaptive immune system that provides protection against mobile genetic elements (viruses, transposable elements and conjugative plasmids). CRISPR clusters contain sequences complementary to antecedent mobile elements and target invading nucleic acids. CRISPR clusters are transcribed and processed into CRISPR RNA (crRNA). Involved in the integration of spacer DNA into the CRISPR cassette. Functions as a ssRNA-specific endoribonuclease. The sequence is that of CRISPR-associated endoribonuclease Cas2 1 (cas21) from Archaeoglobus fulgidus (strain ATCC 49558 / DSM 4304 / JCM 9628 / NBRC 100126 / VC-16).